The primary structure comprises 447 residues: Peptide chain release factor 1, mitochondrial (447 aa).

Residues 1 to 63 constitute a mitochondrion transit peptide; sequence MNRRHLFAWL…LLNKNCSRRY (63 aa). The tract at residues 299–363 is GGQ domain; sequence PKDLRIDTFR…LRARLYQQII (65 aa). Residues 313-315 carry the GGQ motif; that stretch reads GGQ. Glutamine 315 is subject to N5-methylglutamine.

Belongs to the prokaryotic/mitochondrial release factor family. In terms of processing, methylation of glutamine in the GGQ triplet by HEMK1 is conserved from bacteria to mammals.

The protein localises to the mitochondrion. Mitochondrial peptide chain release factor that directs the termination of translation in response to the peptide chain non-canonical stop codons AGG and AGA. Non-canonical termination codons AGG and AGA are found at the end of MT-CO1/COX1 and MT-ND6/ND6 open reading frames, respectively. Recognizes non-canonical stop codons via a network of interactions between the codon, MTRF1 and the ribosomal RNA (rRNA): in contrast to other translation release factors, which identify the codon in the A-site via direct interactions of amino acid side chains with the bases, MTRF1 repositions the first 2 bases of the stop codon to use an intricate network of interactions that includes residues of the release factor, the rRNA of the small ribosomal subunit, as well as neighboring bases of the mRNA. The sequence is that of Peptide chain release factor 1, mitochondrial (MTRF1) from Bos taurus (Bovine).